The primary structure comprises 417 residues: Serine hydroxymethyltransferase (417 aa).

(6S)-5,6,7,8-tetrahydrofolate-binding positions include L112 and 116 to 118 (GHL). K221 carries the post-translational modification N6-(pyridoxal phosphate)lysine. E247 serves as a coordination point for (6S)-5,6,7,8-tetrahydrofolate.

The protein belongs to the SHMT family. In terms of assembly, homodimer. It depends on pyridoxal 5'-phosphate as a cofactor.

The protein localises to the cytoplasm. It carries out the reaction (6R)-5,10-methylene-5,6,7,8-tetrahydrofolate + glycine + H2O = (6S)-5,6,7,8-tetrahydrofolate + L-serine. It functions in the pathway one-carbon metabolism; tetrahydrofolate interconversion. It participates in amino-acid biosynthesis; glycine biosynthesis; glycine from L-serine: step 1/1. In terms of biological role, catalyzes the reversible interconversion of serine and glycine with tetrahydrofolate (THF) serving as the one-carbon carrier. This reaction serves as the major source of one-carbon groups required for the biosynthesis of purines, thymidylate, methionine, and other important biomolecules. Also exhibits THF-independent aldolase activity toward beta-hydroxyamino acids, producing glycine and aldehydes, via a retro-aldol mechanism. This chain is Serine hydroxymethyltransferase, found in Borrelia garinii subsp. bavariensis (strain ATCC BAA-2496 / DSM 23469 / PBi) (Borreliella bavariensis).